A 242-amino-acid chain; its full sequence is Phosphoribosylaminoimidazole-succinocarboxamide synthase (242 aa).

Belongs to the SAICAR synthetase family.

It catalyses the reaction 5-amino-1-(5-phospho-D-ribosyl)imidazole-4-carboxylate + L-aspartate + ATP = (2S)-2-[5-amino-1-(5-phospho-beta-D-ribosyl)imidazole-4-carboxamido]succinate + ADP + phosphate + 2 H(+). It functions in the pathway purine metabolism; IMP biosynthesis via de novo pathway; 5-amino-1-(5-phospho-D-ribosyl)imidazole-4-carboxamide from 5-amino-1-(5-phospho-D-ribosyl)imidazole-4-carboxylate: step 1/2. The polypeptide is Phosphoribosylaminoimidazole-succinocarboxamide synthase (Cyanothece sp. (strain PCC 7425 / ATCC 29141)).